The sequence spans 89 residues: Large ribosomal subunit protein bL27 (89 aa).

Positions 1–21 (MAHKKGASSSRNGRDSNAQRL) are disordered. A compositionally biased stretch (polar residues) spans 7–19 (ASSSRNGRDSNAQ).

The protein belongs to the bacterial ribosomal protein bL27 family.

This Frankia alni (strain DSM 45986 / CECT 9034 / ACN14a) protein is Large ribosomal subunit protein bL27.